The following is a 104-amino-acid chain: L-rhamnose mutarotase (104 aa).

Tyr-18 lines the substrate pocket. Residue His-22 is the Proton donor of the active site. Substrate is bound by residues Tyr-41 and 76–77 (WW).

It belongs to the rhamnose mutarotase family. Homodimer.

It is found in the cytoplasm. It catalyses the reaction alpha-L-rhamnose = beta-L-rhamnose. Its pathway is carbohydrate metabolism; L-rhamnose metabolism. Functionally, involved in the anomeric conversion of L-rhamnose. This chain is L-rhamnose mutarotase, found in Rhizobium meliloti (strain 1021) (Ensifer meliloti).